The sequence spans 366 residues: Beta sliding clamp (366 aa).

This sequence belongs to the beta sliding clamp family. Forms a ring-shaped head-to-tail homodimer around DNA which binds and tethers DNA polymerases and other proteins to the DNA. The DNA replisome complex has a single clamp-loading complex (3 tau and 1 each of delta, delta', psi and chi subunits) which binds 3 Pol III cores (1 core on the leading strand and 2 on the lagging strand) each with a beta sliding clamp dimer. Additional proteins in the replisome are other copies of gamma, psi and chi, Ssb, DNA helicase and RNA primase.

It is found in the cytoplasm. In terms of biological role, confers DNA tethering and processivity to DNA polymerases and other proteins. Acts as a clamp, forming a ring around DNA (a reaction catalyzed by the clamp-loading complex) which diffuses in an ATP-independent manner freely and bidirectionally along dsDNA. Initially characterized for its ability to contact the catalytic subunit of DNA polymerase III (Pol III), a complex, multichain enzyme responsible for most of the replicative synthesis in bacteria; Pol III exhibits 3'-5' exonuclease proofreading activity. The beta chain is required for initiation of replication as well as for processivity of DNA replication. This is Beta sliding clamp (dnaN) from Salmonella typhimurium (strain LT2 / SGSC1412 / ATCC 700720).